The sequence spans 176 residues: Large ribosomal subunit protein uL10 (176 aa).

This sequence belongs to the universal ribosomal protein uL10 family. In terms of assembly, part of the ribosomal stalk of the 50S ribosomal subunit. The N-terminus interacts with L11 and the large rRNA to form the base of the stalk. The C-terminus forms an elongated spine to which L12 dimers bind in a sequential fashion forming a multimeric L10(L12)X complex.

Its function is as follows. Forms part of the ribosomal stalk, playing a central role in the interaction of the ribosome with GTP-bound translation factors. The sequence is that of Large ribosomal subunit protein uL10 from Leuconostoc citreum (strain KM20).